The sequence spans 392 residues: Tryptophan synthase beta chain (392 aa).

At Lys-84 the chain carries N6-(pyridoxal phosphate)lysine.

Belongs to the TrpB family. In terms of assembly, tetramer of two alpha and two beta chains. The cofactor is pyridoxal 5'-phosphate.

The catalysed reaction is (1S,2R)-1-C-(indol-3-yl)glycerol 3-phosphate + L-serine = D-glyceraldehyde 3-phosphate + L-tryptophan + H2O. It functions in the pathway amino-acid biosynthesis; L-tryptophan biosynthesis; L-tryptophan from chorismate: step 5/5. Its function is as follows. The beta subunit is responsible for the synthesis of L-tryptophan from indole and L-serine. The protein is Tryptophan synthase beta chain of Campylobacter jejuni subsp. doylei (strain ATCC BAA-1458 / RM4099 / 269.97).